The chain runs to 172 residues: ATP synthase subunit b (172 aa).

A helical membrane pass occupies residues 18–38; it reads IVWSLIILVIVAVFFYKFFMP.

Belongs to the ATPase B chain family. As to quaternary structure, F-type ATPases have 2 components, F(1) - the catalytic core - and F(0) - the membrane proton channel. F(1) has five subunits: alpha(3), beta(3), gamma(1), delta(1), epsilon(1). F(0) has three main subunits: a(1), b(2) and c(10-14). The alpha and beta chains form an alternating ring which encloses part of the gamma chain. F(1) is attached to F(0) by a central stalk formed by the gamma and epsilon chains, while a peripheral stalk is formed by the delta and b chains.

The protein resides in the cell membrane. F(1)F(0) ATP synthase produces ATP from ADP in the presence of a proton or sodium gradient. F-type ATPases consist of two structural domains, F(1) containing the extramembraneous catalytic core and F(0) containing the membrane proton channel, linked together by a central stalk and a peripheral stalk. During catalysis, ATP synthesis in the catalytic domain of F(1) is coupled via a rotary mechanism of the central stalk subunits to proton translocation. In terms of biological role, component of the F(0) channel, it forms part of the peripheral stalk, linking F(1) to F(0). The protein is ATP synthase subunit b of Bifidobacterium longum (strain DJO10A).